We begin with the raw amino-acid sequence, 107 residues long: MQFKVLAALVIGATLAAATGSPSNQCNTGSLQCCNSTGSATDPAIAKLFALLGINVEDVTALVGVTCSPITVVGASGSSCSEQPVCCTNDSFNGIVALGCAPINLNL.

The signal sequence occupies residues 1 to 18 (MQFKVLAALVIGATLAAA). 4 disulfide bridges follow: C26–C86, C33–C80, C34–C67, and C87–C100. Residues N35 and N89 are each glycosylated (N-linked (GlcNAc...) asparagine).

The protein belongs to the fungal hydrophobin family. Self-assembles to form functional amyloid fibrils called rodlets. Self-assembly into fibrillar rodlets occurs spontaneously at hydrophobic:hydrophilic interfaces and the rodlets further associate laterally to form amphipathic monolayers.

It localises to the secreted. The protein localises to the cell wall. Functionally, aerial growth, conidiation, and dispersal of filamentous fungi in the environment rely upon a capability of their secreting small amphipathic proteins called hydrophobins (HPBs) with low sequence identity. Class I can self-assemble into an outermost layer of rodlet bundles on aerial cell surfaces, conferring cellular hydrophobicity that supports fungal growth, development and dispersal; whereas Class II form highly ordered films at water-air interfaces through intermolecular interactions but contribute nothing to the rodlet structure. Pnh3 is a class I hydrophobin that might be involved in the attachment of the hydrophilic wall of hyphae to the hydrophobic surface of wood under inorganic phosphate (Pi)-deficient conditions and enable the mycelium to degrade efficiently the components of wood and to acquire nutrients containing Pi. The chain is Class I hydrophobin 3 from Pholiota nameko.